Reading from the N-terminus, the 373-residue chain is Dual-specificity RNA methyltransferase RlmN (373 aa).

Catalysis depends on Glu94, which acts as the Proton acceptor. Residues 100–339 (EDDRATLCVS…VIVRKTRGDD (240 aa)) form the Radical SAM core domain. Cys107 and Cys344 are disulfide-bonded. 3 residues coordinate [4Fe-4S] cluster: Cys114, Cys118, and Cys121. S-adenosyl-L-methionine contacts are provided by residues 168 to 169 (GE), Ser200, 222 to 224 (SIH), and Asn301. Cys344 serves as the catalytic S-methylcysteine intermediate.

It belongs to the radical SAM superfamily. RlmN family. [4Fe-4S] cluster serves as cofactor.

The protein localises to the cytoplasm. It carries out the reaction adenosine(2503) in 23S rRNA + 2 reduced [2Fe-2S]-[ferredoxin] + 2 S-adenosyl-L-methionine = 2-methyladenosine(2503) in 23S rRNA + 5'-deoxyadenosine + L-methionine + 2 oxidized [2Fe-2S]-[ferredoxin] + S-adenosyl-L-homocysteine. The catalysed reaction is adenosine(37) in tRNA + 2 reduced [2Fe-2S]-[ferredoxin] + 2 S-adenosyl-L-methionine = 2-methyladenosine(37) in tRNA + 5'-deoxyadenosine + L-methionine + 2 oxidized [2Fe-2S]-[ferredoxin] + S-adenosyl-L-homocysteine. Specifically methylates position 2 of adenine 2503 in 23S rRNA and position 2 of adenine 37 in tRNAs. m2A2503 modification seems to play a crucial role in the proofreading step occurring at the peptidyl transferase center and thus would serve to optimize ribosomal fidelity. The chain is Dual-specificity RNA methyltransferase RlmN from Shewanella sp. (strain ANA-3).